We begin with the raw amino-acid sequence, 432 residues long: FAD-dependent monooxygenase pynG (432 aa).

Glu-32, Arg-103, Asp-315, and Ala-328 together coordinate FAD.

Belongs to the paxM FAD-dependent monooxygenase family. The cofactor is FAD.

It participates in secondary metabolite biosynthesis. Its function is as follows. FAD-dependent monooxygenase; part of the gene cluster that mediates the biosynthesis of pyranonigrins, a family of antioxidative compounds. The first step of pyranonigrins biosynthesis is performed by the hybrid PKS-NRPS synthetase that condenses 6 malonyl-CoA units to an acetyl starter unit, to form a 1,3,5-trioxotetradecane-6,8-dienyl-ACP. The enoyl reductase (ER) domain of pynA is likely to be functional during the first two rounds of polyketide chain extension, to generate the saturated C-C bonds of the alkyl side chain. PynA subsequently forms the amide bond between the acyl chain and L-serine. Although pynA has a terminal reductase domain, it appears to require the thioesterase pynI for the release of the straight-chain intermediate from pynA via the formation of a tetramic acid pyranonigrin J. The methyltransferase pynC then coverts pyranonigrin J to pyranonigrin I via N-methylation. The FAD-dependent monooxygenase pynG catalyzes an epoxidation-mediated cyclization to form the dihydro-gamma-pyrone moiety, followed by pynD-catalyzed oxidation of the alcohol to the ketone and enolization to yield the characteristic tetramic acid-fused gamma-pyrone core of pyranonigrin H. Pyranonigrin H is substrate of pynH for dehydration-mediated exo-methylene formation from the serine side chain to produce pyranonigrin E, before the oxidase pynE reduces the exo-methylene of pyranonigrin E into a pendant methyl to form pyranonigrin G. The FAD-linked oxidoreductase pynB performs the reverse reaction and converts pyranonigrin G back to pyranonigrin E. The polypeptide is FAD-dependent monooxygenase pynG (Aspergillus niger (strain ATCC MYA-4892 / CBS 513.88 / FGSC A1513)).